Consider the following 411-residue polypeptide: Carbohydrate sulfotransferase 1 (411 aa).

Residues 1 to 2 (MQ) are Cytoplasmic-facing. The chain crosses the membrane as a helical; Signal-anchor for type II membrane protein span at residues 3 to 23 (CSWKAVLLLALASIAIQYTAI). The Lumenal segment spans residues 24-411 (RTFTAKSFHT…VEERDFRPFS (388 aa)). Residue N56 is glycosylated (N-linked (GlcNAc...) asparagine). 69 to 75 (TRSGSSF) serves as a coordination point for 3'-phosphoadenylyl sulfate. 2 N-linked (GlcNAc...) asparagine glycosylation sites follow: N145 and N189. Residue 234-242 (RDPRGILAS) participates in 3'-phosphoadenylyl sulfate binding. N334 carries N-linked (GlcNAc...) asparagine glycosylation. The Cell attachment site signature appears at 337 to 339 (RGD).

It belongs to the sulfotransferase 1 family. Gal/GlcNAc/GalNAc subfamily. As to expression, widely expressed at low level. Expressed in brain and skeletal muscle. Expressed by high endothelial cells (HEVs) and leukocytes.

The protein localises to the golgi apparatus membrane. The catalysed reaction is 3'-phosphoadenylyl sulfate + keratan = adenosine 3',5'-bisphosphate + keratan 6'-sulfate.. The protein operates within glycan metabolism. Functionally, sulfotransferase that utilizes 3'-phospho-5'-adenylyl sulfate (PAPS) as sulfonate donor to catalyze the transfer of sulfate to position 6 of internal galactose (Gal) residues of keratan. Cooperates with B4GALT4 and B3GNT7 glycosyltransferases and CHST6 sulfotransferase to construct and elongate disulfated disaccharide unit [-&gt;3(6-sulfoGalbeta)1-&gt;4(6-sulfoGlcNAcbeta)1-&gt;] within keratan sulfate polymer. Has a preference for sulfating keratan sulfate, but it also transfers sulfate to the unsulfated polymer. Involved in biosynthesis of phosphacan, a major keratan sulfate proteoglycan in the developing brain. Involved in biosynthesis of 6-sulfoGalbeta-containing O-linked glycans in high endothelial venules of lymph nodes. May act in a synergistic manner with CHST4 to generate sialyl 6',6-disulfo Lewis X motif, a recognition determinant for immune cell receptors implicated in leukocyte trafficking. Catalyzes sulfation of N-acetyllactosamine (LacNAc) oligosaccharides with highest efficiency for sialylated LacNAc structures. The polypeptide is Carbohydrate sulfotransferase 1 (Homo sapiens (Human)).